Consider the following 220-residue polypeptide: Iron-sulfur flavoprotein AF_1436 (220 aa).

The [4Fe-4S] cluster site is built by cysteine 47, cysteine 50, cysteine 53, and cysteine 59.

The protein belongs to the SsuE family. Isf subfamily. In terms of assembly, homodimer. FMN serves as cofactor. Requires [4Fe-4S] cluster as cofactor.

Functionally, redox-active protein probably involved in electron transport. The polypeptide is Iron-sulfur flavoprotein AF_1436 (Archaeoglobus fulgidus (strain ATCC 49558 / DSM 4304 / JCM 9628 / NBRC 100126 / VC-16)).